Consider the following 284-residue polypeptide: NADH-cytochrome b5 reductase 1 (284 aa).

Residues P8–F28 traverse the membrane as a helical segment. The FAD-binding FR-type domain occupies N41–T144. Residues E124–G139 and S150–L182 contribute to the FAD site.

This sequence belongs to the flavoprotein pyridine nucleotide cytochrome reductase family. In terms of assembly, monomer. Component of the 2-(3-amino-3-carboxypropyl)histidine synthase complex composed of DPH1, DPH2, DPH3 and a NADH-dependent reductase, predominantly CBR1. FAD is required as a cofactor.

It is found in the mitochondrion outer membrane. It carries out the reaction 2 Fe(III)-[cytochrome b5] + NADH = 2 Fe(II)-[cytochrome b5] + NAD(+) + H(+). The catalysed reaction is 2 Fe(3+)-[Dph3] + NADH = 2 Fe(2+)-[Dph3] + NAD(+) + H(+). Its pathway is protein modification; peptidyl-diphthamide biosynthesis. NADH-dependent reductase for DPH3 and cytochrome b5. Required for the first step of diphthamide biosynthesis, a post-translational modification of histidine which occurs in elongation factor 2. DPH1 and DPH2 transfer a 3-amino-3-carboxypropyl (ACP) group from S-adenosyl-L-methionine (SAM) to a histidine residue, the reaction is assisted by a reduction system comprising DPH3 and a NADH-dependent reductase, predominantly CBR1. By reducing DPH3, also involved in the formation of the tRNA wobble base modification mcm5s 2U (5-methoxycarbonylmethyl-2-thiouridine), mediated by the elongator complex. The cytochrome b5/NADH cytochrome b5 reductase electron transfer system supports the catalytic activity of several sterol biosynthetic enzymes. The chain is NADH-cytochrome b5 reductase 1 (CBR1) from Debaryomyces hansenii (strain ATCC 36239 / CBS 767 / BCRC 21394 / JCM 1990 / NBRC 0083 / IGC 2968) (Yeast).